The following is a 1256-amino-acid chain: N-acetylglucosamine-1-phosphotransferase subunits alpha/beta (1256 aa).

A helical transmembrane segment spans residues 22–42 (VCFLGVVVTIVSAFQFGEVVL). 5 N-linked (GlcNAc...) asparagine glycosylation sites follow: asparagine 83, asparagine 114, asparagine 148, asparagine 179, and asparagine 250. 4 disulfides stabilise this stretch: cysteine 438/cysteine 461, cysteine 452/cysteine 468, cysteine 505/cysteine 528, and cysteine 519/cysteine 535. LNR repeat units lie at residues 438 to 473 (CAEG…GNSG) and 505 to 545 (CNQG…ELYK). Residues aspartate 449, aspartate 464, aspartate 467, aspartate 516, aspartate 531, and aspartate 534 each coordinate Ca(2+). N-linked (GlcNAc...) asparagine glycans are attached at residues asparagine 614, asparagine 699, asparagine 729, asparagine 829, and asparagine 1009. The 100-residue stretch at 699 to 798 (NISLLPKDAQ…TFPAVSVKVN (100 aa)) folds into the DMAP1-binding domain. The EF-hand domain occupies 1005 to 1040 (VQPLNISQVFDEVDTDQSGVLSDREIRTLATRIHEL). Ca(2+) contacts are provided by aspartate 1018, aspartate 1020, serine 1022, and glutamate 1029. N-linked (GlcNAc...) asparagine glycosylation occurs at asparagine 1129. The chain crosses the membrane as a helical span at residues 1215–1235 (VLATLIMFTIFSFFAEQLIAL).

Belongs to the stealth family. As to quaternary structure, hexamer of two alpha, two beta and two gamma (GNPTG) subunits; disulfide-linked. The alpha and/or the beta subunits of the enzyme constitute the catalytic subunits. Interacts with LYSET; facilitates proper localization of GNPTAB. Post-translationally, the alpha- and beta-subunits are generated by a proteolytic cleavage by MBTPS1 protease at the Lys-928-Asp-929 bond. Expressed in the heart, whole brain, placenta, lung, liver, skeletal muscle, kidney and pancreas.

The protein resides in the golgi apparatus membrane. The enzyme catalyses N(4)-[alpha-D-mannosyl-(1-&gt;2)-alpha-D-mannosyl-(glycan)]-L-asparaginyl-[protein] + UDP-N-acetyl-alpha-D-glucosamine = N(4)-[6-(N-acetyl-alpha-D-glucosaminyl-1-phospho)-alpha-D-mannosyl-(1-&gt;2)-alpha-D-mannosyl-(glycan)]-L-asparaginyl-[protein] + UMP + H(+). Its function is as follows. Catalyzes the formation of mannose 6-phosphate (M6P) markers on high mannose type oligosaccharides in the Golgi apparatus. M6P residues are required to bind to the M6P receptors (MPR), which mediate the vesicular transport of lysosomal enzymes to the endosomal/prelysosomal compartment. The sequence is that of N-acetylglucosamine-1-phosphotransferase subunits alpha/beta (GNPTAB) from Homo sapiens (Human).